The sequence spans 118 residues: Ribonuclease P protein component (118 aa).

The protein belongs to the RnpA family. In terms of assembly, consists of a catalytic RNA component (M1 or rnpB) and a protein subunit.

The catalysed reaction is Endonucleolytic cleavage of RNA, removing 5'-extranucleotides from tRNA precursor.. RNaseP catalyzes the removal of the 5'-leader sequence from pre-tRNA to produce the mature 5'-terminus. It can also cleave other RNA substrates such as 4.5S RNA. The protein component plays an auxiliary but essential role in vivo by binding to the 5'-leader sequence and broadening the substrate specificity of the ribozyme. This chain is Ribonuclease P protein component, found in Shewanella putrefaciens (strain CN-32 / ATCC BAA-453).